We begin with the raw amino-acid sequence, 379 residues long: uncharacterized protein (379 aa).

29 to 36 (GPLNSGKT) lines the ATP pocket.

Belongs to the archaeal ATPase family.

This is an uncharacterized protein from Methanocaldococcus jannaschii (strain ATCC 43067 / DSM 2661 / JAL-1 / JCM 10045 / NBRC 100440) (Methanococcus jannaschii).